We begin with the raw amino-acid sequence, 107 residues long: Sperm-specific class P protein 31 (107 aa).

Residues M1–S107 form the MSP domain.

Expressed at higher level in testis.

The sequence is that of Sperm-specific class P protein 31 (ssp-31) from Caenorhabditis elegans.